A 1367-amino-acid chain; its full sequence is DNA polymerase III PolC-type (1367 aa).

Residues 358 to 513 (FVVLDFETTG…DDARVTAQVF (156 aa)) form the Exonuclease domain.

Belongs to the DNA polymerase type-C family. PolC subfamily.

Its subcellular location is the cytoplasm. It carries out the reaction DNA(n) + a 2'-deoxyribonucleoside 5'-triphosphate = DNA(n+1) + diphosphate. Required for replicative DNA synthesis. This DNA polymerase also exhibits 3' to 5' exonuclease activity. This is DNA polymerase III PolC-type from Thermotoga maritima (strain ATCC 43589 / DSM 3109 / JCM 10099 / NBRC 100826 / MSB8).